The chain runs to 186 residues: Probable nicotinate-nucleotide adenylyltransferase (186 aa).

Belongs to the NadD family.

It catalyses the reaction nicotinate beta-D-ribonucleotide + ATP + H(+) = deamido-NAD(+) + diphosphate. The protein operates within cofactor biosynthesis; NAD(+) biosynthesis; deamido-NAD(+) from nicotinate D-ribonucleotide: step 1/1. Its function is as follows. Catalyzes the reversible adenylation of nicotinate mononucleotide (NaMN) to nicotinic acid adenine dinucleotide (NaAD). The chain is Probable nicotinate-nucleotide adenylyltransferase from Thermus thermophilus (strain ATCC 27634 / DSM 579 / HB8).